The following is a 206-amino-acid chain: MILSDKDILNYVNSGRVCINPFNRNFVGPCSYDVTLGEEFITYNEDVYDVKKQLSHRSFKIDNSIMVCPLHHHLDEKIIERYKEKYSIDCVVSGGLLGTTNEYVELPNDVCAQYQGRSSFGRVFLQSHQTAGWIDSGFKGKITLEIVAYDKPVILYKNQRIGQLIFSKTLSPADIGYSDRKCSKYARQTSVMPSLIKKDFENDLEE.

DCTP is bound by residues 117–122, D135, 143–145, Q163, Y177, K184, and Q188; these read RSSFGR and TLE. Residue E145 is the Proton donor/acceptor of the active site.

Belongs to the dCTP deaminase family. As to quaternary structure, homotrimer.

The catalysed reaction is dCTP + 2 H2O = dUMP + NH4(+) + diphosphate. Its pathway is pyrimidine metabolism; dUMP biosynthesis; dUMP from dCTP: step 1/1. Bifunctional enzyme that catalyzes both the deamination of dCTP to dUTP and the hydrolysis of dUTP to dUMP without releasing the toxic dUTP intermediate. In Methanococcus vannielii (strain ATCC 35089 / DSM 1224 / JCM 13029 / OCM 148 / SB), this protein is dCTP deaminase, dUMP-forming.